A 197-amino-acid polypeptide reads, in one-letter code: Dephospho-CoA kinase (197 aa).

Residues 4-197 (LIGLTGGIAT…VLKWLKTITK (194 aa)) form the DPCK domain. 12-17 (ATGKST) is an ATP binding site.

This sequence belongs to the CoaE family.

The protein resides in the cytoplasm. The catalysed reaction is 3'-dephospho-CoA + ATP = ADP + CoA + H(+). The protein operates within cofactor biosynthesis; coenzyme A biosynthesis; CoA from (R)-pantothenate: step 5/5. Functionally, catalyzes the phosphorylation of the 3'-hydroxyl group of dephosphocoenzyme A to form coenzyme A. In Lactiplantibacillus plantarum (strain ATCC BAA-793 / NCIMB 8826 / WCFS1) (Lactobacillus plantarum), this protein is Dephospho-CoA kinase.